A 307-amino-acid polypeptide reads, in one-letter code: Myeloid-associated differentiation marker-like protein 2 (307 aa).

2 MARVEL domains span residues 17-154 (AVTS…ARPG) and 159-303 (YMAT…RIRF). 7 helical membrane-spanning segments follow: residues 53-73 (FCMA…ACEF), 90-110 (AFAM…PLYF), 129-149 (LAAS…VALT), 163-183 (VSGL…GALV), 198-218 (VAVY…SVMG), 232-252 (IVYT…WPVF), and 278-298 (LVVA…LAYS).

Belongs to the MAL family.

It is found in the membrane. This Mus musculus (Mouse) protein is Myeloid-associated differentiation marker-like protein 2 (Myadml2).